A 185-amino-acid chain; its full sequence is Large ribosomal subunit protein uL5 (185 aa).

Belongs to the universal ribosomal protein uL5 family. In terms of assembly, part of the 50S ribosomal subunit; part of the 5S rRNA/L5/L18/L25 subcomplex. Contacts the 5S rRNA and the P site tRNA. Forms a bridge to the 30S subunit in the 70S ribosome.

In terms of biological role, this is one of the proteins that bind and probably mediate the attachment of the 5S RNA into the large ribosomal subunit, where it forms part of the central protuberance. In the 70S ribosome it contacts protein S13 of the 30S subunit (bridge B1b), connecting the 2 subunits; this bridge is implicated in subunit movement. Contacts the P site tRNA; the 5S rRNA and some of its associated proteins might help stabilize positioning of ribosome-bound tRNAs. The protein is Large ribosomal subunit protein uL5 of Streptomyces coelicolor (strain ATCC BAA-471 / A3(2) / M145).